Here is a 137-residue protein sequence, read N- to C-terminus: Nucleoside diphosphate kinase (137 aa).

Positions 9, 57, 85, 91, 102, and 112 each coordinate ATP. His-115 (pros-phosphohistidine intermediate) is an active-site residue.

Belongs to the NDK family. In terms of assembly, homotetramer. The cofactor is Mg(2+).

The protein resides in the cytoplasm. It carries out the reaction a 2'-deoxyribonucleoside 5'-diphosphate + ATP = a 2'-deoxyribonucleoside 5'-triphosphate + ADP. The enzyme catalyses a ribonucleoside 5'-diphosphate + ATP = a ribonucleoside 5'-triphosphate + ADP. Its function is as follows. Major role in the synthesis of nucleoside triphosphates other than ATP. The ATP gamma phosphate is transferred to the NDP beta phosphate via a ping-pong mechanism, using a phosphorylated active-site intermediate. This chain is Nucleoside diphosphate kinase, found in Citrifermentans bemidjiense (strain ATCC BAA-1014 / DSM 16622 / JCM 12645 / Bem) (Geobacter bemidjiensis).